The following is a 78-amino-acid chain: Large ribosomal subunit protein bL28 (78 aa).

This sequence belongs to the bacterial ribosomal protein bL28 family.

This chain is Large ribosomal subunit protein bL28, found in Shigella boydii serotype 4 (strain Sb227).